Consider the following 217-residue polypeptide: Small ribosomal subunit protein uS3 (217 aa).

The KH type-2 domain occupies 40–110 (IRDLINKGFN…EVYINIHEVR (71 aa)).

It belongs to the universal ribosomal protein uS3 family. Part of the 30S ribosomal subunit. Forms a tight complex with proteins S10 and S14.

Its function is as follows. Binds the lower part of the 30S subunit head. Binds mRNA in the 70S ribosome, positioning it for translation. The protein is Small ribosomal subunit protein uS3 of Rickettsia akari (strain Hartford).